The following is a 237-amino-acid chain: Uridylate kinase (237 aa).

Residue 11-14 coordinates ATP; that stretch reads KLSG. Gly-53 is a UMP binding site. ATP is bound by residues Gly-54 and Arg-58. Residues Asp-73 and 134–141 contribute to the UMP site; that span reads TGNPFFTT. ATP contacts are provided by Thr-161, Tyr-167, and Asp-170.

It belongs to the UMP kinase family. As to quaternary structure, homohexamer.

It is found in the cytoplasm. It catalyses the reaction UMP + ATP = UDP + ADP. It functions in the pathway pyrimidine metabolism; CTP biosynthesis via de novo pathway; UDP from UMP (UMPK route): step 1/1. Its activity is regulated as follows. Inhibited by UTP. In terms of biological role, catalyzes the reversible phosphorylation of UMP to UDP. The chain is Uridylate kinase from Burkholderia lata (strain ATCC 17760 / DSM 23089 / LMG 22485 / NCIMB 9086 / R18194 / 383).